A 379-amino-acid chain; its full sequence is Glutamate 5-kinase (379 aa).

K19 serves as a coordination point for ATP. Residues S59, D146, and N158 each coordinate substrate. ATP-binding positions include 178–179 and 220–226; these read TD and TGGMATK. Residues 285–363 form the PUA domain; that stretch reads SGDIVIDQGA…KDIISILGYD (79 aa).

Belongs to the glutamate 5-kinase family.

It is found in the cytoplasm. It carries out the reaction L-glutamate + ATP = L-glutamyl 5-phosphate + ADP. It functions in the pathway amino-acid biosynthesis; L-proline biosynthesis; L-glutamate 5-semialdehyde from L-glutamate: step 1/2. Its function is as follows. Catalyzes the transfer of a phosphate group to glutamate to form L-glutamate 5-phosphate. This is Glutamate 5-kinase from Vibrio vulnificus (strain YJ016).